A 196-amino-acid polypeptide reads, in one-letter code: 3-isopropylmalate dehydratase small subunit (196 aa).

It belongs to the LeuD family. LeuD type 1 subfamily. As to quaternary structure, heterodimer of LeuC and LeuD.

It carries out the reaction (2R,3S)-3-isopropylmalate = (2S)-2-isopropylmalate. Its pathway is amino-acid biosynthesis; L-leucine biosynthesis; L-leucine from 3-methyl-2-oxobutanoate: step 2/4. Functionally, catalyzes the isomerization between 2-isopropylmalate and 3-isopropylmalate, via the formation of 2-isopropylmaleate. This Streptococcus sanguinis (strain SK36) protein is 3-isopropylmalate dehydratase small subunit.